The chain runs to 224 residues: Serum amyloid P-component (224 aa).

Positions 1 to 19 (MERLLLWVSVLASLPEAFA) are cleaved as a signal peptide. One can recognise a Pentraxin (PTX) domain in the interval 24–224 (TGKVFVFPRE…YVVIKPRVWS (201 aa)). Residue N51 is glycosylated (N-linked (GlcNAc...) asparagine). C55 and C114 are joined by a disulfide. Residues D77, N78, E155, Q156, D157, and Q167 each contribute to the Ca(2+) site.

Belongs to the pentraxin family. Homopentamer. Pentraxin (or pentaxin) have a discoid arrangement of 5 non-covalently bound subunits. It depends on Ca(2+) as a cofactor.

It is found in the secreted. In Sus scrofa (Pig), this protein is Serum amyloid P-component (APCS).